We begin with the raw amino-acid sequence, 818 residues long: H(+)/Cl(-) exchange transporter 3 (818 aa).

Residues 1–125 lie on the Cytoplasmic side of the membrane; sequence MESEQLFHRG…WEMTKSLYDA (125 aa). 3 consecutive short sequence motifs (di-leucine internalization motif; mediates targeting to late endosome and lysosome membranes) follow at residues 28–29, 46–47, and 71–75; these read LL and LLDLL. Residues 126–163 traverse the membrane as a helical segment; sequence WSGWLVVTLTGLASGALAGLIDIAADWMTDLKEGICLS. Asn-177 carries N-linked (GlcNAc...) asparagine glycosylation. Residues 209 to 232 traverse the membrane as a helical segment; the sequence is MNYIMYIFWALSFAFLAVSLVKVF. The Selectivity filter part_1 motif lies at 238–242; the sequence is GSGIP. Residue Ser-239 coordinates chloride. Residues 241-248 constitute an intramembrane region (helical); sequence IPEIKTIL. A run of 2 helical transmembrane segments spans residues 258 to 276 and 282 to 301; these read GKWTLMIKTITLVLAVASG and EGPLVHVACCCGNIFSYLFP. Residues 280–284 carry the Selectivity filter part_2 motif; sequence GKEGP. Intramembrane regions (helical) lie at residues 313–325 and 329–337; these read VLSAASAAGVSVA and PIGGVLFSL. The next 3 membrane-spanning stretches (helical) occupy residues 349–367, 391–416, and 423–443; these read LWRSFFAALVAAFVLRSIN, FPFILLGVFGGLWGAFFIRANIAWCR, and FGKYPVLEVIIVAAITAVIAF. Asn-451 and Asn-479 each carry an N-linked (GlcNAc...) asparagine glycan. 2 helical membrane-spanning segments follow: residues 500-520 and 525-544; these read IWQLCLALIFKIIMTVFTFGI and GLFIPSMAIGAIAGRIVGIA. The Selectivity filter part_3 signature appears at 525–529; that stretch reads GLFIP. Residue Phe-527 participates in chloride binding. 2 consecutive intramembrane regions (helical) follow at residues 572–586 and 590–601; these read GLYAMVGAAACLGGV and TVSLVVIVFELT. The segment at residues 602-605 is an intramembrane region (note=Loop between two helices); the sequence is GGLE. A helical membrane pass occupies residues 606 to 624; that stretch reads YIVPLMAAVMTSKWVGDAF. At 625-818 the chain is on the cytoplasmic side; the sequence is GREGIYEAHI…NQDPASIMFN (194 aa). A chloride-binding site is contributed by Tyr-630. CBS domains lie at 658–722 and 755–812; these read MRPR…ARKK and LDMS…NQDP. ATP contacts are provided by residues 689–691 and 796–799; these read YNG and TKKD.

Belongs to the chloride channel (TC 2.A.49) family. ClC-3/CLCN3 subfamily. In terms of assembly, monomer and homodimer. Forms heterodimers with CLCN4. In terms of processing, N-glycosylated. In terms of tissue distribution, abundant in brain, especially in the olfactory bulb, hippocampus, and cerebellum. A moderate expression is seen in the lung, kidney and adrenal gland.

The protein resides in the lysosome membrane. The protein localises to the late endosome membrane. It localises to the cell membrane. Its subcellular location is the early endosome membrane. Its function is as follows. Strongly outwardly rectifying, electrogenic H(+)/Cl(-)exchanger which mediates the exchange of chloride ions against protons. The CLC channel family contains both chloride channels and proton-coupled anion transporters that exchange chloride or another anion for protons. The presence of conserved gating glutamate residues is typical for family members that function as antiporters. Strongly outwardly rectifying, electrogenic H(+)/Cl(-)exchanger which mediates the exchange of chloride ions against protons. May play an important role in neuronal cell function through regulation of membrane excitability by protein kinase C. It could help neuronal cells to establish short-term memory. The protein is H(+)/Cl(-) exchange transporter 3 (Clcn3) of Rattus norvegicus (Rat).